The primary structure comprises 82 residues: MVMIRLARMGARKQPYYRIVVIEKRSARNGRSLEVVGTYNPRTNPASVELKRDRIDYWTGKGAQMSDRVAKLVQQNPAPAAA.

It belongs to the bacterial ribosomal protein bS16 family.

The chain is Small ribosomal subunit protein bS16 from Acidobacterium capsulatum (strain ATCC 51196 / DSM 11244 / BCRC 80197 / JCM 7670 / NBRC 15755 / NCIMB 13165 / 161).